Here is a 142-residue protein sequence, read N- to C-terminus: Large ribosomal subunit protein uL11 (142 aa).

This sequence belongs to the universal ribosomal protein uL11 family. In terms of assembly, part of the ribosomal stalk of the 50S ribosomal subunit. Interacts with L10 and the large rRNA to form the base of the stalk. L10 forms an elongated spine to which L12 dimers bind in a sequential fashion forming a multimeric L10(L12)X complex. One or more lysine residues are methylated.

Its function is as follows. Forms part of the ribosomal stalk which helps the ribosome interact with GTP-bound translation factors. This is Large ribosomal subunit protein uL11 from Klebsiella pneumoniae (strain 342).